The sequence spans 197 residues: Dephospho-CoA kinase (197 aa).

A DPCK domain is found at 3-197 (VYGLTGGIGS…QSLLHTHQNT (195 aa)). 11–16 (GSGKTT) lines the ATP pocket.

Belongs to the CoaE family.

It is found in the cytoplasm. It carries out the reaction 3'-dephospho-CoA + ATP = ADP + CoA + H(+). The protein operates within cofactor biosynthesis; coenzyme A biosynthesis; CoA from (R)-pantothenate: step 5/5. Its function is as follows. Catalyzes the phosphorylation of the 3'-hydroxyl group of dephosphocoenzyme A to form coenzyme A. The chain is Dephospho-CoA kinase from Hydrogenovibrio crunogenus (strain DSM 25203 / XCL-2) (Thiomicrospira crunogena).